We begin with the raw amino-acid sequence, 327 residues long: Aldo-keto reductase family 1 member A1 (327 aa).

Residues 13 to 22 (GQKIPLIGLG), T23, W24, and D47 contribute to the NADP(+) site. Y52 functions as the Proton donor in the catalytic mechanism. Positions 164, 165, 213, 215, 217, 265, 266, 267, 268, 271, 274, and 275 each coordinate NADP(+).

This sequence belongs to the aldo/keto reductase family.

It is found in the cytoplasm. The protein resides in the cytosol. It localises to the apical cell membrane. The enzyme catalyses a primary alcohol + NADP(+) = an aldehyde + NADPH + H(+). The catalysed reaction is S-nitroso-CoA + NADPH + H(+) = sulfinamide-CoA + NADP(+). It catalyses the reaction S-nitrosoglutathione + NADPH + H(+) = S-(hydroxysulfenamide)glutathione + NADP(+). Its function is as follows. Catalyzes the NADPH-dependent reduction of a wide variety of carbonyl-containing compounds to their corresponding alcohols. Displays enzymatic activity towards endogenous metabolites such as aromatic and aliphatic aldehydes, ketones, monosaccharides and bile acids. Acts as an aldehyde-detoxification enzyme. Also acts as an inhibitor of protein S-nitrosylation by mediating degradation of S-nitroso-coenzyme A (S-nitroso-CoA), a cofactor required to S-nitrosylate proteins. Also acts as a S-nitroso-glutathione reductase by catalyzing the NADPH-dependent reduction of S-nitrosoglutathione. Displays no reductase activity towards retinoids. In Xenopus tropicalis (Western clawed frog), this protein is Aldo-keto reductase family 1 member A1 (akr1a1).